A 355-amino-acid chain; its full sequence is D-alanine--D-alanine ligase (355 aa).

The ATP-grasp domain occupies 143–350 (KKIFSHLEIP…IDQLVAKLVD (208 aa)). 178 to 233 (IEKLKLPVFVKPANSGSSLGISKAKTRSEIIKALQKAWEIDSRIVIEEGLDVRELE) serves as a coordination point for ATP. Residues Asp303, Glu317, and Asn319 each coordinate Mg(2+).

Belongs to the D-alanine--D-alanine ligase family. The cofactor is Mg(2+). Mn(2+) is required as a cofactor.

It is found in the cytoplasm. The catalysed reaction is 2 D-alanine + ATP = D-alanyl-D-alanine + ADP + phosphate + H(+). It participates in cell wall biogenesis; peptidoglycan biosynthesis. Functionally, cell wall formation. This is D-alanine--D-alanine ligase from Prochlorococcus marinus subsp. pastoris (strain CCMP1986 / NIES-2087 / MED4).